Consider the following 624-residue polypeptide: Chaperone protein HtpG (624 aa).

An a; substrate-binding region spans residues 1 to 336; that stretch reads MKGQETRGFQ…SNDLPLNVSR (336 aa). Residues 337-552 form a b region; the sequence is EILQDSTVTR…ADEMSTQMAK (216 aa). The c stretch occupies residues 553 to 624; that stretch reads LFAAAGQSVP…IRRMNQLLVS (72 aa).

Belongs to the heat shock protein 90 family. In terms of assembly, homodimer.

The protein resides in the cytoplasm. Its function is as follows. Molecular chaperone. Has ATPase activity. This Salmonella choleraesuis (strain SC-B67) protein is Chaperone protein HtpG.